Consider the following 293-residue polypeptide: Foldase protein PrsA 2 (293 aa).

Positions 1–20 (MKKKLILGLVMMMALFSLAA) are cleaved as a signal peptide. Cys21 carries N-palmitoyl cysteine lipidation. Cys21 is lipidated: S-diacylglycerol cysteine. The 92-residue stretch at 135–226 (QPDITVSHIL…YGYHIIQMDK (92 aa)) folds into the PpiC domain.

Belongs to the PrsA family.

Its subcellular location is the cell membrane. It carries out the reaction [protein]-peptidylproline (omega=180) = [protein]-peptidylproline (omega=0). In terms of biological role, plays a major role in protein secretion by helping the post-translocational extracellular folding of several secreted proteins. This is Foldase protein PrsA 2 (prsA2) from Listeria monocytogenes serovar 1/2a (strain ATCC BAA-679 / EGD-e).